We begin with the raw amino-acid sequence, 276 residues long: Cis-2,3-dihydrobiphenyl-2,3-diol dehydrogenase (276 aa).

9–33 lines the NAD(+) pocket; the sequence is LVTGGGSGLGRAIVDRFVAEGARVA. Substrate is bound at residue Ser142. Tyr155 acts as the Proton acceptor in catalysis.

The protein belongs to the short-chain dehydrogenases/reductases (SDR) family.

The enzyme catalyses (2R,3S)-3-phenylcyclohexa-3,5-diene-1,2-diol + NAD(+) = biphenyl-2,3-diol + NADH + H(+). It participates in xenobiotic degradation; biphenyl degradation; 2-hydroxy-2,4-pentadienoate and benzoate from biphenyl: step 2/4. The sequence is that of Cis-2,3-dihydrobiphenyl-2,3-diol dehydrogenase (bphB) from Pseudomonas sp. (strain KKS102).